A 101-amino-acid polypeptide reads, in one-letter code: Enhancer of yellow 2 transcription factor (101 aa).

It belongs to the ENY2 family. As to quaternary structure, component of the nuclear pore complex (NPC)-associated AMEX complex (anchoring and mRNA export complex), composed of at least e(y)2 and xmas-2. Component of the SAGA transcription coactivator-HAT complexes, at least composed of Ada2b, e(y)2, Pcaf/Gcn5, Taf10 and Nipped-A/Trrap. Within the SAGA complex, e(y)2, Sgf11, and not/nonstop form an additional subcomplex of SAGA called the DUB module (deubiquitination module). Component of the THO complex, composed of at least e(y)2, HPR1, THO2, THOC5, THOC6 and THOC7. Interacts with e(y)1. Interacts with su(Hw) (via zinc fingers). Interacts with xmas-2; required for localization to the nuclear periphery. Interacts with the nuclear pore complex (NPC).

It localises to the nucleus. Its subcellular location is the nucleoplasm. The protein localises to the cytoplasm. Functionally, involved in mRNA export coupled transcription activation by association with both the AMEX and the SAGA complexes. The SAGA complex is a multiprotein complex that activates transcription by remodeling chromatin and mediating histone acetylation and deubiquitination. Within the SAGA complex, participates in a subcomplex that specifically deubiquitinates histone H2B. The SAGA complex is recruited to specific gene promoters by activators, where it is required for transcription. Required for nuclear receptor-mediated transactivation. Involved in transcription elongation by recruiting the THO complex onto nascent mRNA. The AMEX complex functions in docking export-competent ribonucleoprotein particles (mRNPs) to the nuclear entrance of the nuclear pore complex (nuclear basket). AMEX participates in mRNA export and accurate chromatin positioning in the nucleus by tethering genes to the nuclear periphery. This chain is Enhancer of yellow 2 transcription factor, found in Drosophila sechellia (Fruit fly).